We begin with the raw amino-acid sequence, 126 residues long: Small ribosomal subunit protein uS13 (126 aa).

The interval 92–126 (HRRGLPVRGQRTKTNARTRKGPKRTVAGKKKAGRK) is disordered.

It belongs to the universal ribosomal protein uS13 family. Part of the 30S ribosomal subunit. Forms a loose heterodimer with protein S19. Forms two bridges to the 50S subunit in the 70S ribosome.

Its function is as follows. Located at the top of the head of the 30S subunit, it contacts several helices of the 16S rRNA. In the 70S ribosome it contacts the 23S rRNA (bridge B1a) and protein L5 of the 50S subunit (bridge B1b), connecting the 2 subunits; these bridges are implicated in subunit movement. Contacts the tRNAs in the A and P-sites. This chain is Small ribosomal subunit protein uS13, found in Kineococcus radiotolerans (strain ATCC BAA-149 / DSM 14245 / SRS30216).